Here is a 68-residue protein sequence, read N- to C-terminus: Small ribosomal subunit protein bS21 (68 aa).

This sequence belongs to the bacterial ribosomal protein bS21 family.

The chain is Small ribosomal subunit protein bS21 from Ruegeria pomeroyi (strain ATCC 700808 / DSM 15171 / DSS-3) (Silicibacter pomeroyi).